Here is a 157-residue protein sequence, read N- to C-terminus: Increased recombination centers protein 23 (157 aa).

At 1 to 6 (MIEALE) the chain is on the cytoplasmic side. A helical transmembrane segment spans residues 7–29 (IVLLLVIQSLQYICRTCIAFLLI). Residues 30–33 (PFLG) lie on the Lumenal side of the membrane. A helical membrane pass occupies residues 34-56 (LYAFDLFLYVYRMILYLSQMFNY). Residues 57–157 (KRKLGRSKTN…EEGYYIAGSI (101 aa)) lie on the Cytoplasmic side of the membrane.

It localises to the endoplasmic reticulum membrane. Its function is as follows. Is probably involved in a pathway contributing to genomic integrity. This chain is Increased recombination centers protein 23 (IRC23), found in Saccharomyces cerevisiae (strain ATCC 204508 / S288c) (Baker's yeast).